The primary structure comprises 93 residues: Defensin alpha 4 (93 aa).

An N-terminal signal peptide occupies residues 1–19 (MRTLTLLITLLLLALHTQA). Residues 20-62 (ESPQERAKAAPDQDMVMEDQDIFISFGGYKGTVLQDAVVKAGQ) constitute a propeptide that is removed on maturation. 3 cysteine pairs are disulfide-bonded: Cys-64-Cys-92, Cys-66-Cys-81, and Cys-71-Cys-91.

The protein belongs to the alpha-defensin family. As to expression, expressed in neutrophils (at protein level). Highest expression in bone marrow and to a much lesser extent in small intestine.

The protein localises to the secreted. Host-defense peptide that has antimicrobial activity against Gram-positive and Gram-negative bacteria and fungi (in vitro). Exhibits activity against E.coli, A.calcoaceticus, S,aureus and C.albicans. The sequence is that of Defensin alpha 4 from Rattus norvegicus (Rat).